We begin with the raw amino-acid sequence, 340 residues long: GTP 3',8-cyclase (340 aa).

A Radical SAM core domain is found at Lys-8–Asp-227. Arg-17 provides a ligand contact to GTP. Residues Cys-24 and Cys-28 each contribute to the [4Fe-4S] cluster site. Residue Tyr-30 coordinates S-adenosyl-L-methionine. Cys-31 contributes to the [4Fe-4S] cluster binding site. Arg-71 is a binding site for GTP. Gly-75 serves as a coordination point for S-adenosyl-L-methionine. Position 102 (Thr-102) interacts with GTP. Ser-126 contacts S-adenosyl-L-methionine. A GTP-binding site is contributed by Lys-163. Met-197 provides a ligand contact to S-adenosyl-L-methionine. Residues Cys-261 and Cys-264 each contribute to the [4Fe-4S] cluster site. Arg-266–Arg-268 lines the GTP pocket. Cys-278 serves as a coordination point for [4Fe-4S] cluster.

Belongs to the radical SAM superfamily. MoaA family. Monomer and homodimer. [4Fe-4S] cluster is required as a cofactor.

The enzyme catalyses GTP + AH2 + S-adenosyl-L-methionine = (8S)-3',8-cyclo-7,8-dihydroguanosine 5'-triphosphate + 5'-deoxyadenosine + L-methionine + A + H(+). The protein operates within cofactor biosynthesis; molybdopterin biosynthesis. Its function is as follows. Catalyzes the cyclization of GTP to (8S)-3',8-cyclo-7,8-dihydroguanosine 5'-triphosphate. The chain is GTP 3',8-cyclase from Staphylococcus aureus (strain MRSA252).